The sequence spans 334 residues: Fructose-1,6-bisphosphatase class 1 (334 aa).

Mg(2+) is bound by residues E87, D106, L108, and D109. Residues D109–S112, N208, and K274 contribute to the substrate site. Mg(2+) is bound at residue E280.

It belongs to the FBPase class 1 family. In terms of assembly, homotetramer. The cofactor is Mg(2+).

It localises to the cytoplasm. The catalysed reaction is beta-D-fructose 1,6-bisphosphate + H2O = beta-D-fructose 6-phosphate + phosphate. It participates in carbohydrate biosynthesis; gluconeogenesis. This chain is Fructose-1,6-bisphosphatase class 1, found in Psychrobacter sp. (strain PRwf-1).